An 805-amino-acid chain; its full sequence is Sucrose synthase 1 (805 aa).

Positions 274-751 (MVFNVVILSP…GLQRIYEKYT (478 aa)) are GT-B glycosyltransferase.

The protein belongs to the glycosyltransferase 1 family. Plant sucrose synthase subfamily.

It carries out the reaction an NDP-alpha-D-glucose + D-fructose = a ribonucleoside 5'-diphosphate + sucrose + H(+). Sucrose-cleaving enzyme that provides UDP-glucose and fructose for various metabolic pathways. The protein is Sucrose synthase 1 of Tulipa gesneriana (Garden tulip).